The primary structure comprises 447 residues: GTPase Der (447 aa).

2 consecutive EngA-type G domains span residues 4-165 (KIIT…SVEE) and 180-357 (LQIV…KIWN). GTP contacts are provided by residues 10-17 (GRPNVGKS), 57-61 (DTPGL), 119-122 (NKCE), 186-193 (GRPNAGKS), 233-237 (DTAGL), and 298-301 (NKWD). One can recognise a KH-like domain in the interval 358-443 (KKITTNKLNK…PIRFTYVKNK (86 aa)).

It belongs to the TRAFAC class TrmE-Era-EngA-EngB-Septin-like GTPase superfamily. EngA (Der) GTPase family. As to quaternary structure, associates with the 50S ribosomal subunit.

GTPase that plays an essential role in the late steps of ribosome biogenesis. The protein is GTPase Der of Rickettsia prowazekii (strain Madrid E).